The following is a 349-amino-acid chain: Probable G-protein coupled receptor 21 (349 aa).

The Extracellular portion of the chain corresponds to Met-1–Val-32. N-linked (GlcNAc...) asparagine glycans are attached at residues Asn-2 and Asn-8. A helical transmembrane segment spans residues Leu-33–Phe-53. Over His-54–Asp-75 the chain is Cytoplasmic. Residues Leu-76 to Val-96 form a helical membrane-spanning segment. Topologically, residues Glu-97–Ile-104 are extracellular. Residues Phe-105–Ile-125 traverse the membrane as a helical segment. The Cytoplasmic portion of the chain corresponds to Asp-126–Arg-147. A helical membrane pass occupies residues Leu-148–Trp-168. Residues Gly-169–Phe-191 lie on the Extracellular side of the membrane. The chain crosses the membrane as a helical span at residues Thr-192–Phe-212. Residues Asn-213–Met-252 are Cytoplasmic-facing. A helical transmembrane segment spans residues Val-253–Leu-273. At Leu-274–Arg-283 the chain is on the extracellular side. Residues Phe-284–Tyr-304 form a helical membrane-spanning segment. At Ser-305–Ile-349 the chain is on the cytoplasmic side.

This sequence belongs to the G-protein coupled receptor 1 family. In terms of tissue distribution, not detected in the brain regions thalamus, putamen, caudate, frontal cortex, pons, hypothalamus, hippocampus.

It localises to the cell membrane. Its function is as follows. Orphan receptor. This is Probable G-protein coupled receptor 21 (GPR21) from Homo sapiens (Human).